The chain runs to 270 residues: Mediator of RNA polymerase II transcription subunit 4 (270 aa).

A disordered region spans residues 1–25 (MAAASSGEKEKERPGGGLGAAGGNS). N-acetylalanine is present on alanine 2. Coiled coils occupy residues 24–48 (NSTRERLLSALEDLEVLSRELIEML) and 90–131 (HHEM…AKEK). A Phosphoserine modification is found at serine 32. A disordered region spans residues 231 to 270 (MLPPNHSHDFLLEPPGHNKENEDDVEVMSTDSSSSSSDSD). Residues 236-250 (HSHDFLLEPPGHNKE) are compositionally biased toward basic and acidic residues. Low complexity predominate over residues 259–270 (STDSSSSSSDSD).

It belongs to the Mediator complex subunit 4 family. Component of the Mediator complex, which is composed of MED1, MED4, MED6, MED7, MED8, MED9, MED10, MED11, MED12, MED13, MED13L, MED14, MED15, MED16, MED17, MED18, MED19, MED20, MED21, MED22, MED23, MED24, MED25, MED26, MED27, MED29, MED30, MED31, CCNC, CDK8 and CDC2L6/CDK11. The MED12, MED13, CCNC and CDK8 subunits form a distinct module termed the CDK8 module. Mediator containing the CDK8 module is less active than Mediator lacking this module in supporting transcriptional activation. Individual preparations of the Mediator complex lacking one or more distinct subunits have been variously termed ARC, CRSP, DRIP, PC2, SMCC and TRAP.

It is found in the nucleus. Component of the Mediator complex, a coactivator involved in the regulated transcription of nearly all RNA polymerase II-dependent genes. Mediator functions as a bridge to convey information from gene-specific regulatory proteins to the basal RNA polymerase II transcription machinery. Mediator is recruited to promoters by direct interactions with regulatory proteins and serves as a scaffold for the assembly of a functional preinitiation complex with RNA polymerase II and the general transcription factors. This is Mediator of RNA polymerase II transcription subunit 4 (MED4) from Bos taurus (Bovine).